The following is a 261-amino-acid chain: tRNA pseudouridine synthase A (261 aa).

Asp51 acts as the Nucleophile in catalysis. Tyr109 provides a ligand contact to substrate.

Belongs to the tRNA pseudouridine synthase TruA family. In terms of assembly, homodimer.

It carries out the reaction uridine(38/39/40) in tRNA = pseudouridine(38/39/40) in tRNA. Functionally, formation of pseudouridine at positions 38, 39 and 40 in the anticodon stem and loop of transfer RNAs. The protein is tRNA pseudouridine synthase A of Shewanella sp. (strain W3-18-1).